The sequence spans 128 residues: Glycine cleavage system H protein (128 aa).

The region spanning 24 to 106 (VYSVGITEHA…YTDGWLFSIK (83 aa)) is the Lipoyl-binding domain. Position 65 is an N6-lipoyllysine (Lys65).

It belongs to the GcvH family. The glycine cleavage system is composed of four proteins: P, T, L and H. The cofactor is (R)-lipoate.

Functionally, the glycine cleavage system catalyzes the degradation of glycine. The H protein shuttles the methylamine group of glycine from the P protein to the T protein. The sequence is that of Glycine cleavage system H protein from Yersinia enterocolitica serotype O:8 / biotype 1B (strain NCTC 13174 / 8081).